A 308-amino-acid polypeptide reads, in one-letter code: MQLLFALLALGALRPLAGEELHWCYEIQASNYSCLGPDKWQEDCQKSRQSPINIVTTKAEVDHSLGRFHFSGYDQREARLVENNGHSVMVSLGDEISISGGGLPARYRATQLHLHWSQELDRGSEHSLDGERSAMEMHIVHQKETGTSGNEVQDSDDSIAVLAFLVEAGPTMNEGFQPLVTALSAISIPGTNTTMAPSSLWDLLPAEEELRHYFRYMGSLTTPACSETVVWTVFQEPIRLHRDQILEFSSKLYYDQERKMNMKDNVRPLQRLGDRSVFKSQAAGQLLPLPLPTLLVPTLACVMAGLLR.

An N-terminal signal peptide occupies residues 1-18 (MQLLFALLALGALRPLAG). In terms of domain architecture, Alpha-carbonic anhydrase spans 21-281 (LHWCYEIQAS…LGDRSVFKSQ (261 aa)). Cystine bridges form between Cys24–Cys34 and Cys44–Cys225. An N-linked (GlcNAc...) asparagine glycan is attached at Asn31. His86 (proton donor/acceptor) is an active-site residue. Zn(2+) contacts are provided by His113, His115, and His138. Asn192 carries N-linked (GlcNAc...) asparagine glycosylation. Substrate is bound at residue 221–222 (TT). Residue Ser280 is the site of GPI-anchor amidated serine attachment. Positions 281–308 (QAAGQLLPLPLPTLLVPTLACVMAGLLR) are cleaved as a propeptide — removed in mature form.

This sequence belongs to the alpha-carbonic anhydrase family. Interacts with SLC4A4. It depends on Zn(2+) as a cofactor.

Its subcellular location is the cell membrane. The catalysed reaction is hydrogencarbonate + H(+) = CO2 + H2O. With respect to regulation, inhibited by acetazolamide. In terms of biological role, catalyzes the reversible hydration of carbon dioxide into bicarbonate and protons and thus is essential to maintaining intracellular and extracellular pH. May stimulate the sodium/bicarbonate transporter activity of SLC4A4 that acts in pH homeostasis. It is essential for acid overload removal from the retina and retina epithelium, and acid release in the choriocapillaris in the choroid. This chain is Carbonic anhydrase 4 (CA4), found in Oryctolagus cuniculus (Rabbit).